A 104-amino-acid chain; its full sequence is BLOC-1-related complex subunit 7 (104 aa).

It belongs to the BORCS7 family.

It localises to the lysosome membrane. In terms of biological role, as part of a BORC-like complex may play a role in lysosomes movement and localization at the cell periphery. Associated with the cytosolic face of lysosomes, this complex may couple lysosomes to microtubule plus-end-directed kinesin motor. The sequence is that of BLOC-1-related complex subunit 7 from Xenopus tropicalis (Western clawed frog).